We begin with the raw amino-acid sequence, 167 residues long: Adenylylsulfate reductase subunit beta (167 aa).

4Fe-4S ferredoxin-type domains follow at residues 1–35 (MPTFVDPSKCDGCKGGEKTACMYICPNDLMILDPE) and 38–67 (KAFNQEPEACWECYSCIKICPQGAITARPY). Residues Cys10, Cys13, Cys21, Cys25, Cys47, Cys50, Cys53, and Cys57 each contribute to the [4Fe-4S] cluster site.

In terms of assembly, heterodimer composed of AprA and AprB. The heterodimers can dimerize to form heterotetramers. It depends on [4Fe-4S] cluster as a cofactor.

It is found in the cytoplasm. In terms of biological role, iron-sulfur cluster subunit of the adenylylsulfate reductase which catalyzes reversibly the reduction of adenosine 5'-phosphosulfate (APS) to sulfite and AMP during dissimilatory sulfate reduction. The iron-sulfur cluster 2 is thought to accept electrons from a still unknown electron donor and transfer electrons to the iron-sulfur cluster 1 of this protein and then onto the FAD of AprA. This is Adenylylsulfate reductase subunit beta from Megalodesulfovibrio gigas (strain ATCC 19364 / DSM 1382 / NCIMB 9332 / VKM B-1759) (Desulfovibrio gigas).